We begin with the raw amino-acid sequence, 52 residues long: Large ribosomal subunit protein bL32c (52 aa).

This sequence belongs to the bacterial ribosomal protein bL32 family.

It localises to the plastid. The protein localises to the chloroplast. In Aethionema grandiflorum (Persian stone-cress), this protein is Large ribosomal subunit protein bL32c.